We begin with the raw amino-acid sequence, 211 residues long: RILP-like protein 2 (211 aa).

The interval 1–32 (MEEPPVREEEEEEGEEDEERDEVGPEGALGKS) is disordered. The span at 8 to 21 (EEEEEEGEEDEERD) shows a compositional bias: acidic residues. An RH1 domain is found at 24-106 (GPEGALGKSP…RKEVEGLRRQ (83 aa)). Positions 70 to 164 (RVLEMLEALV…VQEELQCYKS (95 aa)) form a coiled coil. S107 is modified (phosphoserine). The region spanning 130-201 (RPRFTLQELR…NKEEKTIIKK (72 aa)) is the RH2 domain. The disordered stretch occupies residues 166–190 (LIPPREGPGGRREKDAVVTSAKNAG).

Belongs to the RILPL family. Homodimer. Interacts with RAC1. Interacts (via N-terminus) with MYO5A, the interaction is required for its role in dendrite formation. Interacts with RAB8A; interaction is dependent on the phosphorylation of RAB8A on 'Thr-72'. Interacts with RAB10 and RAB12; interaction is dependent on the phosphorylation of 'Thr-73' on RAB10 and 'Ser-105' on RAB12. Widely expressed. Expressed at higher level in lung.

The protein resides in the cytoplasm. It localises to the cytosol. The protein localises to the cytoskeleton. Its subcellular location is the microtubule organizing center. It is found in the centrosome. The protein resides in the cell projection. It localises to the cilium. Functionally, involved in cell shape and neuronal morphogenesis, positively regulating the establishment and maintenance of dendritic spines. Plays a role in cellular protein transport, including protein transport away from primary cilia. May function via activation of RAC1 and PAK1. This Homo sapiens (Human) protein is RILP-like protein 2 (RILPL2).